A 421-amino-acid chain; its full sequence is Imidazolonepropionase (421 aa).

The Fe(3+) site is built by His80 and His82. Zn(2+) is bound by residues His80 and His82. Residues Arg89, Tyr152, and His185 each coordinate 4-imidazolone-5-propanoate. Residue Tyr152 coordinates N-formimidoyl-L-glutamate. His249 contributes to the Fe(3+) binding site. His249 provides a ligand contact to Zn(2+). Position 252 (Glu252) interacts with 4-imidazolone-5-propanoate. Asp324 lines the Fe(3+) pocket. Asp324 is a Zn(2+) binding site. The N-formimidoyl-L-glutamate site is built by Asn326 and Gly328. Ser329 is a 4-imidazolone-5-propanoate binding site.

It belongs to the metallo-dependent hydrolases superfamily. HutI family. Homodimer. Zn(2+) serves as cofactor. It depends on Fe(3+) as a cofactor.

Its subcellular location is the cytoplasm. It carries out the reaction 4-imidazolone-5-propanoate + H2O = N-formimidoyl-L-glutamate. It functions in the pathway amino-acid degradation; L-histidine degradation into L-glutamate; N-formimidoyl-L-glutamate from L-histidine: step 3/3. In terms of biological role, catalyzes the hydrolytic cleavage of the carbon-nitrogen bond in imidazolone-5-propanoate to yield N-formimidoyl-L-glutamate. It is the third step in the universal histidine degradation pathway. In Bacillus subtilis (strain 168), this protein is Imidazolonepropionase.